Consider the following 306-residue polypeptide: Glutaminase (306 aa).

Substrate contacts are provided by Ser64, Asn115, Glu159, Asn166, Tyr190, Tyr242, and Val260.

The protein belongs to the glutaminase family. Homotetramer.

The catalysed reaction is L-glutamine + H2O = L-glutamate + NH4(+). This is Glutaminase from Vibrio parahaemolyticus serotype O3:K6 (strain RIMD 2210633).